The sequence spans 371 residues: DNA replication and repair protein RecF (371 aa).

Position 30–37 (30–37) interacts with ATP; sequence GKNGQGKT.

The protein belongs to the RecF family.

Its subcellular location is the cytoplasm. In terms of biological role, the RecF protein is involved in DNA metabolism; it is required for DNA replication and normal SOS inducibility. RecF binds preferentially to single-stranded, linear DNA. It also seems to bind ATP. The chain is DNA replication and repair protein RecF from Clostridioides difficile (strain 630) (Peptoclostridium difficile).